The sequence spans 78 residues: Acyl carrier protein (78 aa).

Positions 2–77 constitute a Carrier domain; that stretch reads SNFEERVKKI…AAIDYVVSSA (76 aa). Position 37 is an O-(pantetheine 4'-phosphoryl)serine (S37).

The protein belongs to the acyl carrier protein (ACP) family. Post-translationally, 4'-phosphopantetheine is transferred from CoA to a specific serine of apo-ACP by AcpS. This modification is essential for activity because fatty acids are bound in thioester linkage to the sulfhydryl of the prosthetic group.

It is found in the cytoplasm. It participates in lipid metabolism; fatty acid biosynthesis. Its function is as follows. Carrier of the growing fatty acid chain in fatty acid biosynthesis. Is probably involved in the biosynthesis of docosahexaenoic acid (DHA) which is produced by this bacterium as a fatty acyl component in its membrane lipid. The sequence is that of Acyl carrier protein from Moritella marina (Vibrio marinus).